The primary structure comprises 227 residues: Cytochrome c oxidase subunit 2 (227 aa).

Over Met-1–Ser-14 the chain is Mitochondrial intermembrane. A helical transmembrane segment spans residues Pro-15–Met-45. Topologically, residues Leu-46–Gln-59 are mitochondrial matrix. Residues Glu-60–Met-87 traverse the membrane as a helical segment. Residues Asp-88–Leu-227 are Mitochondrial intermembrane-facing. Residues His-161, Cys-196, Glu-198, Cys-200, His-204, and Met-207 each contribute to the Cu cation site. A Mg(2+)-binding site is contributed by Glu-198.

This sequence belongs to the cytochrome c oxidase subunit 2 family. In terms of assembly, component of the cytochrome c oxidase (complex IV, CIV), a multisubunit enzyme composed of 14 subunits. The complex is composed of a catalytic core of 3 subunits MT-CO1, MT-CO2 and MT-CO3, encoded in the mitochondrial DNA, and 11 supernumerary subunits COX4I, COX5A, COX5B, COX6A, COX6B, COX6C, COX7A, COX7B, COX7C, COX8 and NDUFA4, which are encoded in the nuclear genome. The complex exists as a monomer or a dimer and forms supercomplexes (SCs) in the inner mitochondrial membrane with NADH-ubiquinone oxidoreductase (complex I, CI) and ubiquinol-cytochrome c oxidoreductase (cytochrome b-c1 complex, complex III, CIII), resulting in different assemblies (supercomplex SCI(1)III(2)IV(1) and megacomplex MCI(2)III(2)IV(2)). Found in a complex with TMEM177, COA6, COX18, COX20, SCO1 and SCO2. Interacts with TMEM177 in a COX20-dependent manner. Interacts with COX20. Interacts with COX16. Cu cation serves as cofactor.

It is found in the mitochondrion inner membrane. The enzyme catalyses 4 Fe(II)-[cytochrome c] + O2 + 8 H(+)(in) = 4 Fe(III)-[cytochrome c] + 2 H2O + 4 H(+)(out). In terms of biological role, component of the cytochrome c oxidase, the last enzyme in the mitochondrial electron transport chain which drives oxidative phosphorylation. The respiratory chain contains 3 multisubunit complexes succinate dehydrogenase (complex II, CII), ubiquinol-cytochrome c oxidoreductase (cytochrome b-c1 complex, complex III, CIII) and cytochrome c oxidase (complex IV, CIV), that cooperate to transfer electrons derived from NADH and succinate to molecular oxygen, creating an electrochemical gradient over the inner membrane that drives transmembrane transport and the ATP synthase. Cytochrome c oxidase is the component of the respiratory chain that catalyzes the reduction of oxygen to water. Electrons originating from reduced cytochrome c in the intermembrane space (IMS) are transferred via the dinuclear copper A center (CU(A)) of subunit 2 and heme A of subunit 1 to the active site in subunit 1, a binuclear center (BNC) formed by heme A3 and copper B (CU(B)). The BNC reduces molecular oxygen to 2 water molecules using 4 electrons from cytochrome c in the IMS and 4 protons from the mitochondrial matrix. This chain is Cytochrome c oxidase subunit 2 (MT-CO2), found in Rhinoceros unicornis (Greater Indian rhinoceros).